Reading from the N-terminus, the 132-residue chain is Small ribosomal subunit protein uS8c (132 aa).

It belongs to the universal ribosomal protein uS8 family. As to quaternary structure, part of the 30S ribosomal subunit.

The protein resides in the plastid. It is found in the chloroplast. In terms of biological role, one of the primary rRNA binding proteins, it binds directly to 16S rRNA central domain where it helps coordinate assembly of the platform of the 30S subunit. The chain is Small ribosomal subunit protein uS8c (rps8) from Staurastrum punctulatum (Green alga).